The following is a 120-amino-acid chain: uncharacterized protein (120 aa).

Positions 1–19 are cleaved as a signal peptide; that stretch reads MKKIVCAVVALLLTLPAWA.

This is an uncharacterized protein from Salmonella typhimurium (strain LT2 / SGSC1412 / ATCC 700720).